A 144-amino-acid chain; its full sequence is uncharacterized protein (144 aa).

Residues 23-82 (EELYKKLENNLRKIETSYLDSKHCQDFKRKIEYYKIVPLISETKEIIKVLIQKIETLEIK) adopt a coiled-coil conformation.

This is an uncharacterized protein from Acanthamoeba polyphaga mimivirus (APMV).